The primary structure comprises 310 residues: Small ribosomal subunit protein uS2 (310 aa).

2 disordered regions span residues Glu-213–Ala-240 and Trp-271–Ala-310. Over residues Ala-216–Ala-227 the composition is skewed to low complexity. Residues Val-297–Ala-310 are compositionally biased toward polar residues.

This sequence belongs to the universal ribosomal protein uS2 family. As to quaternary structure, component of the small ribosomal subunit. Mature ribosomes consist of a small (40S) and a large (60S) subunit. The 40S subunit contains about 33 different proteins and 1 molecule of RNA (18S). The 60S subunit contains about 49 different proteins and 3 molecules of RNA (28S, 5.8S and 5S). Interacts with ribosomal protein S21.

The protein localises to the cytoplasm. Its function is as follows. Required for the assembly and/or stability of the 40S ribosomal subunit. Required for the processing of the 20S rRNA-precursor to mature 18S rRNA in a late step of the maturation of 40S ribosomal subunits. The sequence is that of Small ribosomal subunit protein uS2 from Nematostella vectensis (Starlet sea anemone).